Here is a 227-residue protein sequence, read N- to C-terminus: Enolase-phosphatase E1 (227 aa).

Belongs to the HAD-like hydrolase superfamily. MasA/MtnC family. In terms of assembly, monomer. Mg(2+) serves as cofactor.

It carries out the reaction 5-methylsulfanyl-2,3-dioxopentyl phosphate + H2O = 1,2-dihydroxy-5-(methylsulfanyl)pent-1-en-3-one + phosphate. It participates in amino-acid biosynthesis; L-methionine biosynthesis via salvage pathway; L-methionine from S-methyl-5-thio-alpha-D-ribose 1-phosphate: step 3/6. Its pathway is amino-acid biosynthesis; L-methionine biosynthesis via salvage pathway; L-methionine from S-methyl-5-thio-alpha-D-ribose 1-phosphate: step 4/6. Functionally, bifunctional enzyme that catalyzes the enolization of 2,3-diketo-5-methylthiopentyl-1-phosphate (DK-MTP-1-P) into the intermediate 2-hydroxy-3-keto-5-methylthiopentenyl-1-phosphate (HK-MTPenyl-1-P), which is then dephosphorylated to form the acireductone 1,2-dihydroxy-3-keto-5-methylthiopentene (DHK-MTPene). The chain is Enolase-phosphatase E1 from Pseudomonas syringae pv. syringae (strain B728a).